The chain runs to 35 residues: Photosystem II reaction center protein T (35 aa).

A helical transmembrane segment spans residues 3-23 (SVAYILIFTLCIGTIFFAIAF).

Belongs to the PsbT family. In terms of assembly, PSII is composed of 1 copy each of membrane proteins PsbA, PsbB, PsbC, PsbD, PsbE, PsbF, PsbH, PsbI, PsbJ, PsbK, PsbL, PsbM, PsbT, PsbX, PsbY, PsbZ, Psb30/Ycf12, peripheral proteins PsbO, CyanoQ (PsbQ), PsbU, PsbV and a large number of cofactors. It forms dimeric complexes.

Its subcellular location is the cellular thylakoid membrane. Functionally, found at the monomer-monomer interface of the photosystem II (PS II) dimer, plays a role in assembly and dimerization of PSII. PSII is a light-driven water plastoquinone oxidoreductase, using light energy to abstract electrons from H(2)O, generating a proton gradient subsequently used for ATP formation. This is Photosystem II reaction center protein T from Nostoc punctiforme (strain ATCC 29133 / PCC 73102).